The chain runs to 252 residues: VGPFYVGFFGVTAAFFIMLGTALIIWGAALGPTWNIWQISIAPPDLSYGLGLAPLAKGGLWQIITVCAIGAFGSWALREVEISRKLGIGLHVPAAFSVAIFAYVTLEVIRPLLMGAWGNGFPYGIMSHLDWVSNTGYAYLNFEYNPMHMVAVTLFFTTTLALALHGSLVLAAINPPAGETVKFAEHEDTFFRDFIGYSIGTLGIHRLGLFLALGAGFASATCILLSGPFWTQGWPSWWGWWLHLPIWQFGGH.

3 helical membrane-spanning segments follow: residues 8–30 (FFGV…GAAL), 58–86 (GGLW…SRKL), and 91–113 (HVPA…RPLL). 2 residues coordinate (7R,8Z)-bacteriochlorophyll b: His-128 and His-148. The chain crosses the membrane as a helical span at residues 146-173 (PMHMVAVTLFFTTTLALALHGSLVLAAI). His-165 contacts Fe cation. Residue Phe-191 coordinates a ubiquinone. The helical transmembrane segment at 200-225 (GTLGIHRLGLFLALGAGFASATCILL) threads the bilayer. Residue His-205 participates in Fe cation binding.

This sequence belongs to the reaction center PufL/M/PsbA/D family. In terms of assembly, reaction center is composed of four bacteriochlorophylls, two bacteriopheophytins, two ubiquinones, one iron, and two highly hydrophobic polypeptide chains (designated L and M).

Its subcellular location is the cell inner membrane. Functionally, the reaction center is a membrane-bound complex that mediates the initial photochemical event in the electron transfer process of photosynthesis. The polypeptide is Reaction center protein L chain (pufL) (Acidiphilium cryptum).